A 243-amino-acid polypeptide reads, in one-letter code: HTH-type quorum sensing-dependent transcriptional regulator RpaR (243 aa).

The HTH luxR-type domain occupies 174–239; the sequence is KPIRRNRLTP…AAVAKALTLG (66 aa). A DNA-binding region (H-T-H motif) is located at residues 198-217; the sequence is AWEISVILCITERTVKFHLI.

Belongs to the autoinducer-regulated transcriptional regulatory protein family.

Its function is as follows. Responds to the quorum-sensing autoinducer 4-coumaroyl-homoserine lactone to regulate expression of several genes. Represses expression of rpaI in the absence of the inducer. This is HTH-type quorum sensing-dependent transcriptional regulator RpaR from Rhodopseudomonas palustris (strain ATCC BAA-98 / CGA009).